The primary structure comprises 341 residues: THO complex subunit 6 homolog (341 aa).

WD repeat units follow at residues 22–61, 74–112, 124–163, 166–205, 215–254, 256–293, and 295–339; these read RLHMTIFSQSVSPCGKFLAAGNNYGQIAIFSLSAALSSEA, AHDGPVYSMVSTDRHLLSAGDGEVKGWLWAEILKKGCKE, LEVPEINALLLVPKENSLILAGGDCQLHTMDLETGTFTRA, GHTDYIHCLALRERSPEVLSGGEDGAVRLWDLRIAKEVQT, SRPHNGRWIGCLATDSDWMVCGGGPALTLWHLRSSTPTTV, PIRAPQKHVTFYQDLILSAGQGCCVNHWQLSGELKAQV, and GSSP…AFSL. Serine 180 carries the phosphoserine modification.

Belongs to the WD repeat THOC6 family. As to quaternary structure, component of the THO subcomplex, which is composed of THOC1, THOC2, THOC3, THOC5, THOC6 and THOC7. The THO subcomplex interacts with DDX39B to form the THO-DDX39B complex which multimerizes into a 28-subunit tetrameric assembly. Component of the transcription/export (TREX) complex at least composed of ALYREF/THOC4, DDX39B, SARNP/CIP29, CHTOP and the THO subcomplex; in the complex interacts with THOC5; together with THOC5 and THOC7, plays a key structural role in the oligomerization of the THO-DDX39B complex. TREX seems to have a dynamic structure involving ATP-dependent remodeling.

It is found in the nucleus. It localises to the nucleus speckle. Functionally, component of the THO subcomplex of the TREX complex which is thought to couple mRNA transcription, processing and nuclear export, and which specifically associates with spliced mRNA and not with unspliced pre-mRNA. Plays a key structural role in the oligomerization of the THO-DDX39B complex. TREX is recruited to spliced mRNAs by a transcription-independent mechanism, binds to mRNA upstream of the exon-junction complex (EJC) and is recruited in a splicing- and cap-dependent manner to a region near the 5' end of the mRNA where it functions in mRNA export to the cytoplasm via the TAP/NXF1 pathway. Plays a role in apoptosis negative control involved in brain development. This Rattus norvegicus (Rat) protein is THO complex subunit 6 homolog (Thoc6).